Consider the following 254-residue polypeptide: Glycerol operon regulatory protein (254 aa).

Positions 5–67 (IQSLERAAAM…DASGRYQLGA (63 aa)) constitute an HTH iclR-type domain. A DNA-binding region (H-T-H motif) is located at residues 27–46 (LSDIASSLGLAKGTAHGILR). The IclR-ED domain occupies 82-251 (LRARALVWTD…ARAVSRDLGA (170 aa)).

Functionally, may be an activator protein for the gylABX operon. The sequence is that of Glycerol operon regulatory protein (gylR) from Streptomyces coelicolor (strain ATCC BAA-471 / A3(2) / M145).